Reading from the N-terminus, the 183-residue chain is Endoribonuclease YbeY (183 aa).

Zn(2+) contacts are provided by H142, H146, and H152.

Belongs to the endoribonuclease YbeY family. Zn(2+) is required as a cofactor.

The protein resides in the cytoplasm. Single strand-specific metallo-endoribonuclease involved in late-stage 70S ribosome quality control and in maturation of the 3' terminus of the 16S rRNA. The protein is Endoribonuclease YbeY of Trichodesmium erythraeum (strain IMS101).